Here is a 1340-residue protein sequence, read N- to C-terminus: Protein SHORT ROOT IN SALT MEDIUM 1 (1340 aa).

Disordered regions lie at residues 1-73 (MHRD…RSHL), 161-185 (YGEQSSSYLGRELQNEPTRRYADPS), 357-473 (EEER…IRRS), 723-750 (TVEVTKDAEKKSPGDTSGTPTTGTKKTV), 784-990 (PETT…PPRA), and 1063-1269 (RNQR…KREE). Positions 7 to 39 (SSRGTGYGQQQYGSQSGYSQNLGSGYPGSSVSG) are enriched in low complexity. Positions 46 to 60 (QISLSSRHPSITGAP) are enriched in polar residues. Basic and acidic residues-rich tracts occupy residues 173–182 (LQNEPTRRYA), 357–470 (EEER…EASI), and 723–735 (TVEVTKDAEKKSP). Residues 355 to 426 (LREEERRRED…RERKRALEIK (72 aa)) adopt a coiled-coil conformation. Residues 810–824 (GDTSDPSAKANEQTP) are compositionally biased toward polar residues. Residues 828–840 (IVKKKIIKRVAKR) show a composition bias toward basic residues. 4 stretches are compositionally biased toward basic and acidic residues: residues 841-872 (KVAEIDNKMDGDSKKDGDSDEKKVMEVGKKSS), 887-988 (EDVK…EEPP), 1069-1097 (HQEELSVKQNEAKSQDKRQKTAEHEDKEA), and 1105-1138 (PGKDDKETSGKETVDGSREIADKEAVAKTKETLG). Residues 1052–1086 (LKKLRVKIVRQRNQRKRHQEELSVKQNEAKSQDKR) adopt a coiled-coil conformation. Residues 1153–1204 (ENQDEEDDDGDDDPEEDPEEDPEEDPEEDPEEDPEECEEMDVANTEQEEPAE) show a composition bias toward acidic residues. Basic and acidic residues-rich tracts occupy residues 1205-1214 (EPQKKEENLE) and 1229-1257 (TDNRKEERGPNDSKTEIKPKSETEKHGKQ). An EF-hand domain is found at 1270–1305 (TVDKELLQAFRFFDRNQAGYVRVEDMRVTIHSLGKF).

In terms of assembly, interacts with BHLH148/RITF1. As to expression, expressed ubiquitously at high levels, including in guard cells.

The protein resides in the nucleus. In terms of biological role, required for salt tolerance and sodium (Na) homeostasis after salt stress. Together with BHLH148/RITF1, regulates the transcription of several genes involved in the detoxification of reactive oxygen species (ROS) generated by salt (NaCl) stress. Binds calcium. This chain is Protein SHORT ROOT IN SALT MEDIUM 1, found in Arabidopsis thaliana (Mouse-ear cress).